The following is a 388-amino-acid chain: Gastricsin (388 aa).

A signal peptide spans 1 to 16 (MKWLLVALVCLHLLEA). Positions 17–59 (AVIKVPLRKFKSIRETLKEKGLLKEFLNTHKYDPALKYRFGDF) are cleaved as a propeptide — activation peptide. The 313-residue stretch at 73–385 (YFGEISIGTP…DMANNRVGFA (313 aa)) folds into the Peptidase A1 domain. The active site involves D91. Cystine bridges form between C104-C109 and C267-C271. D276 is an active-site residue. Residues C310 and C343 are joined by a disulfide bond.

This sequence belongs to the peptidase A1 family.

It is found in the secreted. The catalysed reaction is More restricted specificity than pepsin A, but shows preferential cleavage at Tyr-|-Xaa bonds. High activity on hemoglobin.. In terms of biological role, hydrolyzes a variety of proteins. The sequence is that of Gastricsin (PGC) from Oryctolagus cuniculus (Rabbit).